Here is a 327-residue protein sequence, read N- to C-terminus: Tetraacyldisaccharide 4'-kinase (327 aa).

Position 58 to 65 (58 to 65 (TVGGTGKT)) interacts with ATP.

The protein belongs to the LpxK family.

It carries out the reaction a lipid A disaccharide + ATP = a lipid IVA + ADP + H(+). It participates in glycolipid biosynthesis; lipid IV(A) biosynthesis; lipid IV(A) from (3R)-3-hydroxytetradecanoyl-[acyl-carrier-protein] and UDP-N-acetyl-alpha-D-glucosamine: step 6/6. In terms of biological role, transfers the gamma-phosphate of ATP to the 4'-position of a tetraacyldisaccharide 1-phosphate intermediate (termed DS-1-P) to form tetraacyldisaccharide 1,4'-bis-phosphate (lipid IVA). The polypeptide is Tetraacyldisaccharide 4'-kinase (Alcanivorax borkumensis (strain ATCC 700651 / DSM 11573 / NCIMB 13689 / SK2)).